The chain runs to 619 residues: MPKLRSATSTEGRNMAGARALWRATGVKDNDFGKPIIAIANSFTQFVPGHVHLKDMGSLVASAIEEAGGIAKEFNTIAVDDGIAMGHGGMLYSLPSRELIADSVEYMVNAHCADALVCISNCDKITPGMLMAALRLNIPVVFVSGGPMEAGKTKLSDKLIKLDLVDAMVAAADSSVSDEDSAKIERSACPTCGSCSGMFTANSMNCLTEALGLSLPGNGSMLATHSDRRELFLEAGRRVMALTKRYYEQDDTSALPRNIACFKAFENATALDIAMGGSSNTVLHLLAAAQEAEVAFTMDDIDRMSRLVPHLCKVAPSTPKYHMEDVHRAGGVMGILGELDRAGLLHTDVPHVAADAGGNLKSVLAKYDVMQTQDDNVKQFFMAGPAGIPTTKAFSQDCRWPSLDDDRREGCIRSREFAFSQEGGLAVLSGNLAENGCIVKTAGVDESNLIFVGSARVYESQDDAVAGILGGEVVAGDVVVIRYEGPKGGPGMQEMLYPTSYLKSRGLGKACALITDGRFSGGTSGLSIGHVSPEAAAGGTIALIENGDRIEIDIPARSIKLAVSDAELAGRRETMLARGPMAWKPVGRERFVSMALKAYAMLATSADKGAVRDRSKLED.

Position 81 (Asp81) interacts with Mg(2+). Residue Cys122 participates in [2Fe-2S] cluster binding. Asp123 and Lys124 together coordinate Mg(2+). N6-carboxylysine is present on Lys124. Residue Cys195 participates in [2Fe-2S] cluster binding. Glu494 provides a ligand contact to Mg(2+). Ser520 (proton acceptor) is an active-site residue.

The protein belongs to the IlvD/Edd family. In terms of assembly, homodimer. Requires [2Fe-2S] cluster as cofactor. Mg(2+) is required as a cofactor.

The enzyme catalyses (2R)-2,3-dihydroxy-3-methylbutanoate = 3-methyl-2-oxobutanoate + H2O. The catalysed reaction is (2R,3R)-2,3-dihydroxy-3-methylpentanoate = (S)-3-methyl-2-oxopentanoate + H2O. The protein operates within amino-acid biosynthesis; L-isoleucine biosynthesis; L-isoleucine from 2-oxobutanoate: step 3/4. Its pathway is amino-acid biosynthesis; L-valine biosynthesis; L-valine from pyruvate: step 3/4. Its function is as follows. Functions in the biosynthesis of branched-chain amino acids. Catalyzes the dehydration of (2R,3R)-2,3-dihydroxy-3-methylpentanoate (2,3-dihydroxy-3-methylvalerate) into 2-oxo-3-methylpentanoate (2-oxo-3-methylvalerate) and of (2R)-2,3-dihydroxy-3-methylbutanoate (2,3-dihydroxyisovalerate) into 2-oxo-3-methylbutanoate (2-oxoisovalerate), the penultimate precursor to L-isoleucine and L-valine, respectively. This chain is Dihydroxy-acid dehydratase, found in Shewanella oneidensis (strain ATCC 700550 / JCM 31522 / CIP 106686 / LMG 19005 / NCIMB 14063 / MR-1).